Here is a 197-residue protein sequence, read N- to C-terminus: Dephospho-CoA kinase (197 aa).

The DPCK domain occupies 2-197 (IIGLTGGIGS…HTKYMELLNE (196 aa)). 10 to 15 (GSGKSA) contributes to the ATP binding site.

The protein belongs to the CoaE family.

The protein resides in the cytoplasm. It catalyses the reaction 3'-dephospho-CoA + ATP = ADP + CoA + H(+). The protein operates within cofactor biosynthesis; coenzyme A biosynthesis; CoA from (R)-pantothenate: step 5/5. Its function is as follows. Catalyzes the phosphorylation of the 3'-hydroxyl group of dephosphocoenzyme A to form coenzyme A. This is Dephospho-CoA kinase from Gamma-proteobacterium EBAC31A08.